The primary structure comprises 344 residues: uncharacterized protein (344 aa).

It belongs to the glycosyltransferase 2 family.

In terms of biological role, may be involved in the production of the exopolysaccharide (EPS) component of the extracellular matrix during biofilm formation. EPS is responsible for the adhesion of chains of cells into bundles. This is an uncharacterized protein from Bacillus subtilis (strain 168).